The primary structure comprises 364 residues: Bifunctional protein Rv2228c (364 aa).

The region spanning 1–139 (MKVVIEADGG…MDAAAQSAAA (139 aa)) is the RNase H type-1 domain. Residues Asp-8, Glu-49, Asp-73, and Asp-123 each coordinate Mg(2+). His-172 functions as the Tele-phosphohistidine intermediate in the catalytic mechanism. Residue Glu-246 is the Proton donor/acceptor; for phosphatase activity of the active site.

The protein in the N-terminal section; belongs to the RNase H family. In the C-terminal section; belongs to the histidine phosphatase superfamily. In terms of assembly, the N-terminal domain alone is monomeric in solution but associates in the crystal to form a dimer. The cofactor is Mg(2+).

It catalyses the reaction Endonucleolytic cleavage to 5'-phosphomonoester.. It carries out the reaction adenosylcob(III)alamin 5'-phosphate + H2O = adenosylcob(III)alamin + phosphate. The catalysed reaction is alpha-ribazole 5'-phosphate + H2O = alpha-ribazole + phosphate. It participates in nucleoside biosynthesis; alpha-ribazole biosynthesis; alpha-ribazole from 5,6-dimethylbenzimidazole: step 2/2. In terms of biological role, endonuclease that displays both RNase H activity with a hybrid RNA/DNA substrate as well as double-stranded RNase activity. As the only authenticated RNase HI in M.tuberculosis, probably plays an important role in the physiology of this organism, being likely involved in bacterial replication. Its function is as follows. Catalyzes the hydrolysis of the phospho group from alpha-ribazole 5'-phosphate to form alpha-ribazole. May also catalyze the conversion of adenosylcobalamin 5'-phosphate to adenosylcobalamin (vitamin B12). Has a possible role in B12 recycling, but the primary role of the C-terminal domain of this phosphatase enzyme could be phosphate generation to help bacterial survival within the macrophage, which is a phosphate-deprived environment. The chain is Bifunctional protein Rv2228c from Mycobacterium tuberculosis (strain ATCC 25618 / H37Rv).